Reading from the N-terminus, the 81-residue chain is Putative defensin-like protein 188 (81 aa).

Residues M1 to S19 form the signal peptide. Cystine bridges form between C31/C81, C37/C57, C43/C75, and C47/C77.

Belongs to the DEFL family.

It localises to the secreted. The polypeptide is Putative defensin-like protein 188 (LCR41) (Arabidopsis thaliana (Mouse-ear cress)).